The primary structure comprises 441 residues: E3 ubiquitin-protein ligase APD1 (441 aa).

2 helical membrane passes run 60–80 (SNLY…FILI) and 305–325 (IAYV…IQFC). Residues 390-429 (CAICFDVPRDCFFLPCGHSVSCYECGTTMQEADGSCPICR) form an RING-type zinc finger.

As to expression, expressed in the shoot apical meristems (SAM), root tips and inflorescences, and, at low levels, in floral buds and pollen.

The protein localises to the endomembrane system. Its subcellular location is the vacuole membrane. The catalysed reaction is S-ubiquitinyl-[E2 ubiquitin-conjugating enzyme]-L-cysteine + [acceptor protein]-L-lysine = [E2 ubiquitin-conjugating enzyme]-L-cysteine + N(6)-ubiquitinyl-[acceptor protein]-L-lysine.. Its pathway is protein modification; protein ubiquitination. Its function is as follows. Involved in pollen mitosis II (PMII) regulation during male gametogenesis. This Arabidopsis thaliana (Mouse-ear cress) protein is E3 ubiquitin-protein ligase APD1.